The primary structure comprises 390 residues: Argininosuccinate synthase (390 aa).

6-14 (AYSGGLDTT) serves as a coordination point for ATP. An L-citrulline-binding site is contributed by tyrosine 84. Position 114 (glycine 114) interacts with ATP. L-aspartate is bound by residues threonine 116, asparagine 120, and aspartate 121. Residue asparagine 120 participates in L-citrulline binding. The L-citrulline site is built by arginine 124, serine 171, serine 180, glutamate 253, and tyrosine 265.

This sequence belongs to the argininosuccinate synthase family. Type 1 subfamily. As to quaternary structure, homotetramer.

It localises to the cytoplasm. It catalyses the reaction L-citrulline + L-aspartate + ATP = 2-(N(omega)-L-arginino)succinate + AMP + diphosphate + H(+). It functions in the pathway amino-acid biosynthesis; L-arginine biosynthesis; L-arginine from L-ornithine and carbamoyl phosphate: step 2/3. This Sulfurisphaera tokodaii (strain DSM 16993 / JCM 10545 / NBRC 100140 / 7) (Sulfolobus tokodaii) protein is Argininosuccinate synthase.